The following is a 171-amino-acid chain: MATGAGAGAATVVSAFTGLKSTAQFPSSFKMSNAAAEWEQKTTSNGGRVRCMQVWPPFGNPKFETLSYLPTLTEEQLVKEVEYLLRNKWVPCLEFDLEGSISRKYNRSPGYYDGRYWVMWKLPMFGCTEASQVINEVRECAKAYPKAFIRVIGFDNVRQVQCISFIVHKPE.

The transit peptide at M1–R50 directs the protein to the chloroplast.

Belongs to the RuBisCO small chain family. Heterohexadecamer of 8 large and 8 small subunits.

Its subcellular location is the plastid. The protein localises to the chloroplast. Functionally, ruBisCO catalyzes two reactions: the carboxylation of D-ribulose 1,5-bisphosphate, the primary event in carbon dioxide fixation, as well as the oxidative fragmentation of the pentose substrate. Both reactions occur simultaneously and in competition at the same active site. Although the small subunit is not catalytic it is essential for maximal activity. The sequence is that of Ribulose bisphosphate carboxylase small subunit, chloroplastic from Pinus thunbergii (Japanese black pine).